The primary structure comprises 260 residues: Tropinone reductase 2 (260 aa).

Residue 13–37 (LVTGGSRGIGYGIVEELANLGASVY) coordinates NADP(+). Ser146 is a substrate binding site. The active-site Proton acceptor is the Tyr159.

The protein belongs to the short-chain dehydrogenases/reductases (SDR) family.

It catalyses the reaction pseudotropine + NADP(+) = tropinone + NADPH + H(+). Its pathway is alkaloid biosynthesis; tropane alkaloid biosynthesis. In terms of biological role, catalyzes the stereospecific reduction of tropinone to pseudotropine. The chain is Tropinone reductase 2 (TR2) from Hyoscyamus niger (Black henbane).